The chain runs to 385 residues: NifS/IcsS protein homolog (385 aa).

Pyridoxal 5'-phosphate-binding positions include 69 to 70 (GT), N149, Q178, and 199 to 201 (SSH). At K202 the chain carries N6-(pyridoxal phosphate)lysine. T237 lines the pyridoxal 5'-phosphate pocket. The Cysteine persulfide intermediate role is filled by C325. C325 serves as a coordination point for [2Fe-2S] cluster.

It belongs to the class-V pyridoxal-phosphate-dependent aminotransferase family. NifS/IscS subfamily. It depends on pyridoxal 5'-phosphate as a cofactor.

This chain is NifS/IcsS protein homolog, found in Lactobacillus delbrueckii subsp. bulgaricus (strain ATCC 11842 / DSM 20081 / BCRC 10696 / JCM 1002 / NBRC 13953 / NCIMB 11778 / NCTC 12712 / WDCM 00102 / Lb 14).